The sequence spans 118 residues: Putative membrane protein insertion efficiency factor (118 aa).

It belongs to the UPF0161 family.

The protein resides in the cell inner membrane. In terms of biological role, could be involved in insertion of integral membrane proteins into the membrane. In Helicobacter pylori (strain HPAG1), this protein is Putative membrane protein insertion efficiency factor.